Here is a 70-residue protein sequence, read N- to C-terminus: Brevinin-ALb (70 aa).

Residues 1–22 form the signal peptide; the sequence is MFTLKKSLLLLFFLGTINLSLC. Positions 23–46 are excised as a propeptide; the sequence is EQERDADEEERRDDDEMDVEVEKR. Cys64 and Cys70 are joined by a disulfide.

Expressed by the skin glands.

Its subcellular location is the secreted. In terms of biological role, antimicrobial peptide with activity against Gram-positive and Gram-negative bacteria and against fungi. Has been tested against S.aureus (MIC=5.5 ug/mL), E.coli (MIC=6.5 ug/mL), B.dysenteriae (MIC=2.2 ug/mL), and C.albicans (MIC=7.5 ug/mL). Can regulate or mediate antimicrobial response by stimulating mast cell degranulation. Induces histamine release. Shows cytotoxicity toward solid tumor cell line HepG2. Also shows a potent hemolytic activity (LD(50)=5 ug/ml). In Amolops loloensis (Lolokou Sucker Frog), this protein is Brevinin-ALb.